The primary structure comprises 691 residues: Elongation factor G (691 aa).

Residues 8–282 (EQTRNIGIMA…AVIDYLPAPT (275 aa)) form the tr-type G domain. Residues 17–24 (AHIDAGKT), 81–85 (DTPGH), and 135–138 (NKMD) each bind GTP.

Belongs to the TRAFAC class translation factor GTPase superfamily. Classic translation factor GTPase family. EF-G/EF-2 subfamily.

The protein resides in the cytoplasm. In terms of biological role, catalyzes the GTP-dependent ribosomal translocation step during translation elongation. During this step, the ribosome changes from the pre-translocational (PRE) to the post-translocational (POST) state as the newly formed A-site-bound peptidyl-tRNA and P-site-bound deacylated tRNA move to the P and E sites, respectively. Catalyzes the coordinated movement of the two tRNA molecules, the mRNA and conformational changes in the ribosome. The sequence is that of Elongation factor G from Natranaerobius thermophilus (strain ATCC BAA-1301 / DSM 18059 / JW/NM-WN-LF).